Reading from the N-terminus, the 498-residue chain is TORTIFOLIA1-like protein 5 (498 aa).

HEAT repeat units lie at residues 56-93 (ETFSLFINCLQSTDSSAKSPVRKHCVSLLSVLSRSHGD), 97-134 (PHLSKMVSTVLRRLRDPDSSVRAACVAASVDMTTNITG), 136-173 (PFSILFGPMIETVIHDCDPNAQISAAMCLAAAVDAADE), 177-214 (EQLQKALPKIGKLLKSEGFKAKAELLGAIGTVIGAVGG), and 219-257 (KAVLDWLLPNVSEFLSSDDWRARKAAAEAMARVAMVEEE). Residues 296–423 (EGDSTEVSES…SSSQAKSNAE (128 aa)) are disordered. Over residues 300 to 322 (TEVSESSSSSKSASSGLSATSGK) the composition is skewed to low complexity. A compositionally biased stretch (basic and acidic residues) spans 343–366 (NDVEPLDRGDTPKDVEQEAVVSKE). Residues 390 to 400 (NGSNKSQVVQS) are compositionally biased toward polar residues. Ser-426 is subject to Phosphoserine.

The chain is TORTIFOLIA1-like protein 5 from Arabidopsis thaliana (Mouse-ear cress).